The chain runs to 371 residues: Beta-1,3-galactosyltransferase 4 (371 aa).

The Cytoplasmic segment spans residues 1-4 (MPLS). The helical; Signal-anchor for type II membrane protein transmembrane segment at 5 to 25 (LFRRVLLAVLLLVIIWTLFGP) threads the bilayer. At 26–371 (SGLGEELLSL…RCRFIAWFSS (346 aa)) the chain is on the lumenal side. The N-linked (GlcNAc...) asparagine glycan is linked to Asn-143.

The protein belongs to the glycosyltransferase 31 family. As to expression, expressed in heart, brain, spleen, kidney, lung and testis.

The protein localises to the golgi apparatus membrane. The catalysed reaction is a ganglioside GM2 (d18:1(4E)) + UDP-alpha-D-galactose = a ganglioside GM1 (d18:1(4E)) + UDP + H(+). The enzyme catalyses a ganglioside GM2 + UDP-alpha-D-galactose = a ganglioside GM1 + UDP + H(+). It catalyses the reaction a ganglioside GD2 (d18:1(4E)) + UDP-alpha-D-galactose = a ganglioside GD1b (d18:1(4E)) + UDP + H(+). It carries out the reaction a ganglioside GA2 (d18:1(4E)) + UDP-alpha-D-galactose = a ganglioside GA1 (d18:1(4E)) + UDP + H(+). Its pathway is protein modification; protein glycosylation. Involved in GM1/GD1B/GA1 ganglioside biosynthesis. This Mus musculus (Mouse) protein is Beta-1,3-galactosyltransferase 4.